We begin with the raw amino-acid sequence, 856 residues long: MGNSHSSENGGNSGSGGGSGGGGSGYSGVSENMIIDLEGRYHIDYKNRNYKKLKPQMFSTFFEHYEIVQADSLINSDFIKNKTVKKNRDNSSNNNSNNNSNNNNNNNTLNNSTIITTTTTTTTTSTPTTTIMITPPQQQQQQRTSLDLTNRDISESSTPNEQQIRLAQEETENQEIVESSFLKSSPVPSPSSSVLKSFESDFQLNTDLTTETFDDNSAEKKRQQQQQQQQNEDSKQSSQQQTQKSKDKDESAKIVNNKSSSTTNIKPILAAAQTSRSTSIPAFNRNKTKEPTKQKIKKEHSTLRKNSLSSSNIITPNNTTNTNAKDGASYFNENSLMSVKSDIKIFSLDLSINRLENITNDILSIMARFEIQELTLSTNFFQIIPDLQLVKSLTTVNLTRNKLSKLQTSVFIELPSLTSLILDRNFISSIPDDIDQIKNLKYLSIKHNALEYLPNSLSNLSQLISLDLSQNKLKTLPPNFDDLINLRMVWLSYNQITSLPSMRKLVNLVTFDISSNKLLSLPKDFAYLVPSRIKQSYSDIDIDEYDENINTCNNINSNNNDSNNSNNNNNNNNDNNNNCNKNNILEMINSTELEGGGLGCLKELNIRDNRELISLPVEYKQVESLMTLVTSIPSEIIPGIFLGGLDSANNAPILQTLGITHILLAIGDCEPFFPKTFKYYSIDDARDAPQYDISQHFEQTNCFIESGRKSGGVLVHCRAGISRSSTLVISYLMKYQRMTFKQAMDLVQSKRPQIQPNPGFKDQLLKYEAKLFCTNILNISSHNSNNKNNNSSNNRKSINNRKSNNIIITINNSSNSNNNNSTDNSNNSSTSTTPNLSSLSSDSSSSASLSKLSISK.

A compositionally biased stretch (low complexity) spans 1–10 (MGNSHSSENG). Disordered stretches follow at residues 1-24 (MGNSHSSENGGNSGSGGGSGGGGS), 84-195 (VKKN…SSVL), and 214-326 (DDNS…NAKD). Residue Gly2 is the site of N-myristoyl glycine attachment. Residues 11–24 (GNSGSGGGSGGGGS) show a composition bias toward gly residues. The span at 90–142 (NSSNNNSNNNSNNNNNNNTLNNSTIITTTTTTTTTSTPTTTIMITPPQQQQQQ) shows a compositional bias: low complexity. The segment covering 155 to 165 (ESSTPNEQQIR) has biased composition (polar residues). 2 stretches are compositionally biased toward low complexity: residues 178–195 (ESSFLKSSPVPSPSSSVL) and 224–243 (QQQQQQQNEDSKQSSQQQTQ). 2 stretches are compositionally biased toward polar residues: residues 254–265 (IVNNKSSSTTNI) and 272–281 (AQTSRSTSIP). The segment covering 306 to 323 (NSLSSSNIITPNNTTNTN) has biased composition (low complexity). 8 LRR repeats span residues 344–365 (KIFSLDLSINRLENITNDILSI), 370–391 (EIQELTLSTNFFQIIPDLQLVK), 392–413 (SLTTVNLTRNKLSKLQTSVFIE), 416–437 (SLTSLILDRNFISSIPDDIDQI), 439–461 (NLKYLSIKHNALEYLPNSLSNLS), 462–484 (QLISLDLSQNKLKTLPPNFDDLI), 485–506 (NLRMVWLSYNQITSLPSMRKLV), and 507–528 (NLVTFDISSNKLLSLPKDFAYL). Residues 554–577 (NINSNNNDSNNSNNNNNNNNDNNN) are disordered. Residues 632–773 (IPSEIIPGIF…LLKYEAKLFC (142 aa)) enclose the Tyrosine-protein phosphatase domain. Cys717 acts as the Phosphocysteine intermediate in catalysis. The interval 810 to 856 (INNSSNSNNNNSTDNSNNSSTSTTPNLSSLSSDSSSSASLSKLSISK) is disordered.

The protein belongs to the protein-tyrosine phosphatase family. Non-receptor class dual specificity subfamily.

It carries out the reaction O-phospho-L-tyrosyl-[protein] + H2O = L-tyrosyl-[protein] + phosphate. The enzyme catalyses O-phospho-L-seryl-[protein] + H2O = L-seryl-[protein] + phosphate. The catalysed reaction is O-phospho-L-threonyl-[protein] + H2O = L-threonyl-[protein] + phosphate. Probable phosphatase with dual specificity toward Ser/Thr and Tyr-containing proteins. This chain is MAP kinase phosphatase with leucine-rich repeats protein 3 (mpl3), found in Dictyostelium discoideum (Social amoeba).